The sequence spans 98 residues: NADH-ubiquinone oxidoreductase chain 4L (98 aa).

3 helical membrane passes run 1-21 (MSLT…GLLL), 29-49 (SLLC…MTIL), and 61-81 (IILL…LVMV).

This sequence belongs to the complex I subunit 4L family. Core subunit of respiratory chain NADH dehydrogenase (Complex I) which is composed of 45 different subunits.

The protein localises to the mitochondrion inner membrane. The enzyme catalyses a ubiquinone + NADH + 5 H(+)(in) = a ubiquinol + NAD(+) + 4 H(+)(out). Core subunit of the mitochondrial membrane respiratory chain NADH dehydrogenase (Complex I) which catalyzes electron transfer from NADH through the respiratory chain, using ubiquinone as an electron acceptor. Part of the enzyme membrane arm which is embedded in the lipid bilayer and involved in proton translocation. This Vampyrodes caraccioli (Great stripe-faced bat) protein is NADH-ubiquinone oxidoreductase chain 4L (MT-ND4L).